Consider the following 427-residue polypeptide: Large ribosomal subunit protein uL4 (427 aa).

At Ala-2 the chain carries N-acetylalanine. At Lys-14 the chain carries N6-acetyllysine. Arg-97 carries the omega-N-methylarginine modification. Lys-106 bears the N6-acetyllysine mark. Lys-239 is covalently cross-linked (Glycyl lysine isopeptide (Lys-Gly) (interchain with G-Cter in SUMO2)). Lys-259 is modified (N6-acetyllysine). Thr-266 is modified (phosphothreonine). Phosphoserine is present on residues Ser-290 and Ser-295. Arg-300 is subject to Citrulline. Residue Lys-327 forms a Glycyl lysine isopeptide (Lys-Gly) (interchain with G-Cter in SUMO2) linkage. Lys-333 and Lys-353 each carry N6-acetyllysine. Lys-364 carries the post-translational modification N6-acetyllysine; alternate. Residue Lys-364 forms a Glycyl lysine isopeptide (Lys-Gly) (interchain with G-Cter in SUMO1); alternate linkage. A Phosphoserine modification is found at Ser-365. Residues 369–427 form a disordered region; sequence AAVAGKKPVVGKKGKKAAVGVKKQKKPLVGKKAAATKKPAPEKKPAEKKPTTEEKKPAA. Basic residues predominate over residues 377–397; the sequence is VVGKKGKKAAVGVKKQKKPLV. Positions 407–427 are enriched in basic and acidic residues; that stretch reads PAPEKKPAEKKPTTEEKKPAA.

It belongs to the universal ribosomal protein uL4 family. In terms of assembly, component of the large ribosomal subunit. May bind IPO9 with low affinity. Interacts with RBM3. Post-translationally, citrullinated by PADI4.

The protein resides in the cytoplasm. Functionally, component of the large ribosomal subunit. The ribosome is a large ribonucleoprotein complex responsible for the synthesis of proteins in the cell. This chain is Large ribosomal subunit protein uL4 (RPL4), found in Homo sapiens (Human).